Consider the following 661-residue polypeptide: Ubiquitin-associated and SH3 domain-containing protein A (661 aa).

The region spanning 15–60 (KLKSRSSPSLLEPLLAMGFPVHTALKALAATGRKTAEEALAWLHDH) is the UBA domain. In terms of domain architecture, SH3 spans 276-341 (VHYQTLRALF…PENYTDRASE (66 aa)). A phosphatase-like region spans residues 395–661 (RKSVLVVRHG…FNWRNWISGN (267 aa)).

In terms of assembly, homodimer or homooligomer. Interacts with CBL. Part of a complex containing CBL and activated EGFR. Interacts with ubiquitin and with mono-ubiquitinated proteins. Interacts with dynamin. In terms of tissue distribution, highest expression of UBASH3A in tissues belonging to the immune system, including spleen, peripheral blood leukocytes, thymus and bone marrow.

It localises to the cytoplasm. Its subcellular location is the nucleus. In terms of biological role, interferes with CBL-mediated down-regulation and degradation of receptor-type tyrosine kinases. Promotes accumulation of activated target receptors, such as T-cell receptors, EGFR and PDGFRB, on the cell surface. Exhibits negligible protein tyrosine phosphatase activity at neutral pH. May act as a dominant-negative regulator of UBASH3B-dependent dephosphorylation. May inhibit dynamin-dependent endocytic pathways by functionally sequestering dynamin via its SH3 domain. The sequence is that of Ubiquitin-associated and SH3 domain-containing protein A (UBASH3A) from Homo sapiens (Human).